Reading from the N-terminus, the 295-residue chain is Bis(5'-nucleosyl)-tetraphosphatase, symmetrical (295 aa).

Residues 271–295 (LSIEHPRHTHTPRRKAKKRHKRSPK) form a disordered region. Residues 277–295 (RHTHTPRRKAKKRHKRSPK) show a composition bias toward basic residues.

Belongs to the Ap4A hydrolase family.

It carries out the reaction P(1),P(4)-bis(5'-adenosyl) tetraphosphate + H2O = 2 ADP + 2 H(+). Hydrolyzes diadenosine 5',5'''-P1,P4-tetraphosphate to yield ADP. This chain is Bis(5'-nucleosyl)-tetraphosphatase, symmetrical, found in Xylella fastidiosa (strain M23).